Reading from the N-terminus, the 448-residue chain is Adenylosuccinate synthetase (448 aa).

GTP is bound by residues 22–28 (GDEGKGK) and 50–52 (GHT). Asp23 acts as the Proton acceptor in catalysis. Asp23 and Gly50 together coordinate Mg(2+). Residues 23–26 (DEGK), 48–51 (NAGH), Thr139, Arg153, Gln234, Thr249, and Arg321 contribute to the IMP site. The active-site Proton donor is the His51. Substrate is bound at residue 317 to 323 (SVTGRPR). GTP-binding positions include Arg323, 349–351 (KLD), and 431–433 (STG).

The protein belongs to the adenylosuccinate synthetase family. Homodimer. The cofactor is Mg(2+).

The protein localises to the cytoplasm. It catalyses the reaction IMP + L-aspartate + GTP = N(6)-(1,2-dicarboxyethyl)-AMP + GDP + phosphate + 2 H(+). Its pathway is purine metabolism; AMP biosynthesis via de novo pathway; AMP from IMP: step 1/2. Plays an important role in the de novo pathway of purine nucleotide biosynthesis. Catalyzes the first committed step in the biosynthesis of AMP from IMP. This is Adenylosuccinate synthetase from Paraburkholderia xenovorans (strain LB400).